We begin with the raw amino-acid sequence, 319 residues long: D-alanine--D-alanine ligase (319 aa).

An ATP-grasp domain is found at 120 to 315 (KRVLAQAGVP…YPELLRRLVE (196 aa)). An ATP-binding site is contributed by 147 to 198 (DPPFFVKPANTGSSVGISRVERFQDLEAALALAFRYDEKAVVEKALSPVREL). Positions 270, 282, and 284 each coordinate Mg(2+).

This sequence belongs to the D-alanine--D-alanine ligase family. It depends on Mg(2+) as a cofactor. Mn(2+) serves as cofactor.

The protein localises to the cytoplasm. It catalyses the reaction 2 D-alanine + ATP = D-alanyl-D-alanine + ADP + phosphate + H(+). The protein operates within cell wall biogenesis; peptidoglycan biosynthesis. In terms of biological role, cell wall formation. The chain is D-alanine--D-alanine ligase from Thermus thermophilus (strain ATCC 27634 / DSM 579 / HB8).